A 164-amino-acid chain; its full sequence is S-ribosylhomocysteine lyase (164 aa).

Residues histidine 54, histidine 58, and cysteine 128 each coordinate Fe cation.

Belongs to the LuxS family. In terms of assembly, homodimer. It depends on Fe cation as a cofactor.

It carries out the reaction S-(5-deoxy-D-ribos-5-yl)-L-homocysteine = (S)-4,5-dihydroxypentane-2,3-dione + L-homocysteine. Its function is as follows. Involved in the synthesis of autoinducer 2 (AI-2) which is secreted by bacteria and is used to communicate both the cell density and the metabolic potential of the environment. The regulation of gene expression in response to changes in cell density is called quorum sensing. Catalyzes the transformation of S-ribosylhomocysteine (RHC) to homocysteine (HC) and 4,5-dihydroxy-2,3-pentadione (DPD). The sequence is that of S-ribosylhomocysteine lyase from Campylobacter jejuni subsp. jejuni serotype O:6 (strain 81116 / NCTC 11828).